The primary structure comprises 166 residues: Large ribosomal subunit protein uL10 (166 aa).

It belongs to the universal ribosomal protein uL10 family. Part of the ribosomal stalk of the 50S ribosomal subunit. The N-terminus interacts with L11 and the large rRNA to form the base of the stalk. The C-terminus forms an elongated spine to which L12 dimers bind in a sequential fashion forming a multimeric L10(L12)X complex.

Functionally, forms part of the ribosomal stalk, playing a central role in the interaction of the ribosome with GTP-bound translation factors. In Streptococcus pyogenes serotype M1, this protein is Large ribosomal subunit protein uL10 (rplJ).